Here is a 953-residue protein sequence, read N- to C-terminus: Atromentin synthetase invA2 (953 aa).

The tract at residues 38–460 (RAVSQYPNHE…SGRIKDTVIV (423 aa)) is adenylation (A) domain. The region spanning 592–670 (APSTETEKTL…SLAKYVDSLI (79 aa)) is the Carrier domain. Residues 597-667 (TEKTLAGIYA…VISSLAKYVD (71 aa)) form a thiolation and peptide carrier (T) domain region. An O-(pantetheine 4'-phosphoryl)serine modification is found at S629. Positions 693 to 795 (PIFMVHPGVG…FTGLINIPPH (103 aa)) are thioesterase (TE) domain.

It belongs to the ATP-dependent AMP-binding enzyme family.

It functions in the pathway secondary metabolite biosynthesis. In terms of biological role, an L-tyrosine:2-oxoglutarate aminotransferase (probably invD) and atromentin synthetase invA2 catalyze consecutive steps to turn over L-tyrosine into atromentin, which represents the generic precursor molecule for the entire terphenylquinone and pulvinic acid family of pigments, which are widely distributed secondary metabolites in homobasidiomycetes. The first step catalyzed by the aminotransferase converts L-tyrosine in to 4-hydroxyphenylpyruvate (4-HPP). Adenylation of two 4-HPP monomers by the invA2 adenylation (A) domain, covalent tethering of the monomers as a thioester and oxoester onto the invA2 thiolation (T) and thioesterase (TE) domains, respectively, and symmetric C-C-bond formation between two monomers catalyzed by the invA2 TE domain leads to atromentin. This Paxillus involutus (Naked brimcap) protein is Atromentin synthetase invA2 (invA2).